We begin with the raw amino-acid sequence, 434 residues long: Prenyltransferase fogH (434 aa).

Residue glutamate 86 coordinates L-tryptophan. The substrate site is built by arginine 101, arginine 248, lysine 250, tyrosine 252, and tyrosine 346.

This sequence belongs to the tryptophan dimethylallyltransferase family.

The protein operates within secondary metabolite biosynthesis. Its function is as follows. Prenyltransferase; part of the gene cluster that mediates the biosynthesis of flavoglaucin and congeners (including aspergin, dihydroauroglaucin and auroglaucin), prenylated salicylaldehyde derivatives carrying a saturated or an unsaturated C-7 side chain. The PKS fogA releases the carboxylic acid (8E,10E,12E)-3,5,7-trihydroxytetradeca-8,10,12-trienoic acid as its product, as well as derivatives with one and two double bonds. FogA is indeed able to reduce the initial triketide, thus being at least partially responsible for the differently saturated heptyl side chains of flavoglaucin congeners. The oxidoreductases fogB, fogC and fogD modify the nascent polyketide in fogA-bound form and, together, fogA, fogB, fogC and fogD are necessary for the formation of the aromatic core and the cyclized PKS products are released as salicyl alcohols. In particular, fogB is responsible for oxidation of a hydroxyl group or reduction of remaining double bond(s) at the C-7 residue whereas fogD is probably involved in the reductive release of the modified PKS products. The cytochrome P450 monooxygenase fogE is then responsible for the hydroxylation at C-3 of the benzene ring. The fogE products are substrates of the prenyltransferase fogH and the prenylated benzyl alcohols are subsequently oxidized by the fogF to produce the final aryl aldehydes flavoglaucin and congeners. The short-chain dehydrogenase fogG does not seem to be involved in the biosynthesis of the prenylated salicylaldehyde derivatives. This chain is Prenyltransferase fogH, found in Aspergillus ruber (strain CBS 135680).